A 1338-amino-acid chain; its full sequence is Thioester-containing protein 1 allele S3 (1338 aa).

Positions 1 to 21 (MWQFIRSRILTVIIFIGAAHG) are cleaved as a signal peptide. N-linked (GlcNAc...) asparagine glycans are attached at residues N68, N199, N242, N312, and N481. Residues 580 to 609 (ENEFDIFHSLGLFARTLDDILFDSANEKTG) form a may contain the cleavage site region. Residues N637, N728, N813, and N828 are each glycosylated (N-linked (GlcNAc...) asparagine). Residues 859-862 (CGEQ) constitute a cross-link (isoglutamyl cysteine thioester (Cys-Gln)). 3 disulfide bridges follow: C1217–C1283, C1326–C1338, and C1329–C1334.

Heterodimer of a TEP1-N chain and an TEP1-C chain non-covalently linked. Forms a complex composed of TEP1-N and TEP1-C heterodimer, LRIM1 and APL1C; the interaction stabilizes TEP1-N and TEP1-C heterodimer, prevents its binding to tissues while circulating in the hemolymph and protects the thioester bond from hydrolysis. Mature TEP1 and to a lesser extent full-length TEP1 interact with SPCLIP1; the interaction is induced by microbial infection. Post-translationally, in the hemolymph, the full-length protein is cleaved by an unknow protease into a 75kDa N-terminal (TEP1-N) chain and an 80kDa C-terminal (TEP1-C) chain which remain non-covalently linked. The TEP1-C chain contains the thioester bond which covalently binds to the pathogen surface. Cleavage is induced by bacterial infection or aseptic wound injury. During embryonic and pupal development, the cleaved form is the predominant form. In terms of processing, N-glycosylated.

It is found in the secreted. Functionally, plays an essential role in the innate immune response against bacteria, fungi and protozoa infection. After proteolytic cleavage, the protein C-terminus binds covalently through a thioester bond to the pathogen surface resulting in pathogen clearance either by melanization or lysis. Initiate the recruitment and activation of a cascade of proteases, mostly of CLIP-domain serine proteases, which leads to the proteolytic cleavage of the prophenoloxidase (PPO) into active phenoloxidase (PO), the rate-limiting enzyme in melanin biosynthesis. In response to parasite P.berghei-mediated infection, binds to and mediates killing of ookinetes, as they egress from midgut epithelial cells into the basal labyrinth, by both lysis and melanization. During bacterial infection, binds to both Gram-positive and Gram-negative bacteria but only promotes phagocytosis of Gram-negative bacteria. Promotes the accumulation of SPCLIP1 onto the surface of P.berghei ookinetes and bacterium E.coli which leads to the melanization of the pathogen. Recruits CLIPA2 to bacteria surface. In response to bacterial infection, required for periostial hemocyte aggregation, but not for the aggregation of sessile hemocytes in non-periostial regions. During the late stage of fungus B.bassiana-mediated infection, required for the initiation of hyphae melanization by binding to the surface of hyphae and recruiting prophenoloxidase PPO to them. Plays a role in male fertility by binding to defective sperm cells and promoting their removal during spermatogenesis. Its function is as follows. Binds to and mediates killing of parasite P.bergei ookinetes by lysis. Binds covalently through a thioester bond to the pathogen surface resulting in pathogen clearance. The chain is Thioester-containing protein 1 allele S3 from Anopheles gambiae (African malaria mosquito).